A 128-amino-acid polypeptide reads, in one-letter code: Large ribosomal subunit protein eL31 (128 aa).

This sequence belongs to the eukaryotic ribosomal protein eL31 family.

This is Large ribosomal subunit protein eL31 (RpL31) from Drosophila virilis (Fruit fly).